We begin with the raw amino-acid sequence, 596 residues long: Proteasome-associated ATPase (596 aa).

A coiled-coil region spans residues 12 to 94; that stretch reads SRWERETQDL…KEEIDRLAQP (83 aa). 280–285 lines the ATP pocket; it reads GCGKTL. Residues 595 to 596 are docks into pockets in the proteasome alpha-ring; that stretch reads YL.

Belongs to the AAA ATPase family. As to quaternary structure, homohexamer. Assembles into a hexameric ring structure that caps the 20S proteasome core. Strongly interacts with the prokaryotic ubiquitin-like protein Pup through a hydrophobic interface; the interacting region of ARC lies in its N-terminal coiled-coil domain. There is one Pup binding site per ARC hexamer ring. Upon ATP-binding, the C-terminus of ARC interacts with the alpha-rings of the proteasome core, possibly by binding to the intersubunit pockets.

The protein operates within protein degradation; proteasomal Pup-dependent pathway. Functionally, ATPase which is responsible for recognizing, binding, unfolding and translocation of pupylated proteins into the bacterial 20S proteasome core particle. May be essential for opening the gate of the 20S proteasome via an interaction with its C-terminus, thereby allowing substrate entry and access to the site of proteolysis. Thus, the C-termini of the proteasomal ATPase may function like a 'key in a lock' to induce gate opening and therefore regulate proteolysis. This is Proteasome-associated ATPase from Stackebrandtia nassauensis (strain DSM 44728 / CIP 108903 / NRRL B-16338 / NBRC 102104 / LLR-40K-21).